The primary structure comprises 472 residues: Tubulin gamma chain (472 aa).

GTP is bound at residue 142–148; it reads AGGTGSG.

Belongs to the tubulin family. In terms of assembly, component of the gamma-tubulin small complex (gamma-TuSC) composed of tubulin gamma chain, gamma-tubulin complex protein 2 (GCP2) and gamma-tubulin complex protein 3 (GCP3). Interacts with GCP2 and GCP3. Interacts with EB1.

The protein localises to the cytoplasm. It is found in the cytoskeleton. Its subcellular location is the flagellum axoneme. It localises to the flagellum basal body. The protein resides in the spindle. The protein localises to the microtubule organizing center. Functionally, tubulin is the major constituent of microtubules (Potential). The gamma chain is found at microtubule organizing centers (MTOC) such as the centrosome. Component of the gamma-tubulin small complex (gamma-TuSC) involved in microtubule nucleation for the formation of median bodies and in the biogenesis of flagella. Gamma-TuSC may be required for the correct positioning of EB1 within the trophozoites. This is Tubulin gamma chain from Giardia intestinalis (strain ATCC 50803 / WB clone C6) (Giardia lamblia).